The primary structure comprises 371 residues: Probable beta-1,4-xylosyltransferase GT43A (371 aa).

Residues 1–19 (MGTAAVAAAERPKQRRSSH) lie on the Cytoplasmic side of the membrane. A helical; Signal-anchor for type II membrane protein membrane pass occupies residues 20–42 (LWKKALLHFSLCFVMGFFTGFAP). Residues 43–371 (SSSSSWRAGS…TSTPKTHNRR (329 aa)) lie on the Lumenal side of the membrane. N-linked (GlcNAc...) asparagine glycans are attached at residues asparagine 176 and asparagine 299.

The protein belongs to the glycosyltransferase 43 family.

It localises to the golgi apparatus membrane. Functionally, probable beta-1,4-xylosyltransferase involved in xylan biosynthesis in cell walls. This is Probable beta-1,4-xylosyltransferase GT43A from Oryza sativa subsp. japonica (Rice).